Consider the following 124-residue polypeptide: UPF0102 protein Mmc1_3298 (124 aa).

It belongs to the UPF0102 family.

This is UPF0102 protein Mmc1_3298 from Magnetococcus marinus (strain ATCC BAA-1437 / JCM 17883 / MC-1).